The sequence spans 124 residues: Small ribosomal subunit protein uS12 (124 aa).

A 3-methylthioaspartic acid modification is found at D89.

Belongs to the universal ribosomal protein uS12 family. As to quaternary structure, part of the 30S ribosomal subunit. Contacts proteins S8 and S17. May interact with IF1 in the 30S initiation complex.

With S4 and S5 plays an important role in translational accuracy. Functionally, interacts with and stabilizes bases of the 16S rRNA that are involved in tRNA selection in the A site and with the mRNA backbone. Located at the interface of the 30S and 50S subunits, it traverses the body of the 30S subunit contacting proteins on the other side and probably holding the rRNA structure together. The combined cluster of proteins S8, S12 and S17 appears to hold together the shoulder and platform of the 30S subunit. The polypeptide is Small ribosomal subunit protein uS12 (Shewanella sp. (strain ANA-3)).